The sequence spans 603 residues: Shugoshin (603 aa).

The stretch at 11-74 forms a coiled coil; the sequence is HIQELQNILD…NVQLRSQVSL (64 aa). 2 disordered regions span residues 112–164 and 201–227; these read ESLP…RSST and NEID…SNRR. 2 stretches are compositionally biased toward low complexity: residues 146–157 and 201–214; these read SVSTGSAHSTSS and NEID…DNLL. Residues 218–227 show a composition bias toward basic residues; sequence PHKKRKSNRR. Residues 304 to 325 are a coiled coil; the sequence is KQDILDETEKRDTAVNQKKKLE. A disordered region spans residues 331–399; the sequence is PVEELSSSKN…ESVDFDRPRR (69 aa). Over residues 362–376 the composition is skewed to basic residues; that stretch reads KVKHSMKSRKPKKNK. The stretch at 431–451 forms a coiled coil; sequence NIQDLQVKYKKSKKVLEKELK. The span at 455–467 shows a compositional bias: basic and acidic residues; sequence KAMKSPKKNEKTF. 2 disordered regions span residues 455–519 and 583–603; these read KAMK…HSSF and HNDT…KNKA. A compositionally biased stretch (low complexity) spans 483-512; it reads RPSSTHSTSSVDAECSHNNSHSENINSSIN. Residues 583–593 are compositionally biased toward polar residues; sequence HNDTNKSSPKT. Residues 594-603 are compositionally biased toward basic residues; that stretch reads YRSRSRKNKA.

The protein belongs to the shugoshin family.

The protein localises to the nucleus. It localises to the chromosome. The protein resides in the centromere. Functionally, plays a central role in chromosome cohesion during cell division by preventing premature dissociation of cohesin complex from centromeres after prophase, when most of cohesin complex dissociates from chromosomes arms. In Candida glabrata (strain ATCC 2001 / BCRC 20586 / JCM 3761 / NBRC 0622 / NRRL Y-65 / CBS 138) (Yeast), this protein is Shugoshin (SGO1).